We begin with the raw amino-acid sequence, 388 residues long: Diacylglycerol O-acyltransferase 2 (388 aa).

At 1–69 (MKTLIAAYSG…NRSKVEKQLQ (69 aa)) the chain is on the cytoplasmic side. A disordered region spans residues 16 to 40 (RQAEADRSQRSHGGPALSREGSGRW). The helical transmembrane segment at 70–88 (VISVLQWVLSFLVLGVACS) threads the bilayer. At 89 to 92 (AILM) the chain is on the lumenal side. Residues 93–112 (YIFCTDCWLIAVLYFTWLVF) traverse the membrane as a helical segment. Residues 113 to 388 (DWNTPKKGGR…LPETEVLEVN (276 aa)) lie on the Cytoplasmic side of the membrane.

This sequence belongs to the diacylglycerol acyltransferase family. As to quaternary structure, forms multimeric complexes consisting of several DGAT2 subunits. Interacts with SLC27A1 and this interaction is enhanced in the presence of ZFYVE1. As to expression, predominantly expressed in liver and white adipose tissue. Expressed at lower level in mammary gland, testis and peripheral blood leukocytes. Expressed in sebaceous glands of normal skin but decreased psoriatic skin.

It localises to the endoplasmic reticulum membrane. It is found in the lipid droplet. The protein resides in the cytoplasm. Its subcellular location is the perinuclear region. It catalyses the reaction an acyl-CoA + a 1,2-diacyl-sn-glycerol = a triacyl-sn-glycerol + CoA. The catalysed reaction is all-trans-retinol + an acyl-CoA = an all-trans-retinyl ester + CoA. It carries out the reaction 2-(9Z-octadecenoyl)-glycerol + (9Z)-octadecenoyl-CoA = 1,2-di-(9Z-octadecenoyl)-sn-glycerol + CoA. The enzyme catalyses 1,2-di-(9Z-octadecenoyl)-sn-glycerol + (9Z)-octadecenoyl-CoA = 1,2,3-tri-(9Z-octadecenoyl)-glycerol + CoA. It catalyses the reaction all-trans-retinol + hexadecanoyl-CoA = all-trans-retinyl hexadecanoate + CoA. The catalysed reaction is 1-O-(9Z-octadecenyl)-glycerol + (9Z)-octadecenoyl-CoA = 1-O-(9Z-octadecyl)-3-(9Z-octadecenoyl)-glycerol + CoA. It carries out the reaction 1-(9Z-octadecenoyl)-glycerol + (9Z)-octadecenoyl-CoA = 1,2-di-(9Z-octadecenoyl)-glycerol + CoA. The enzyme catalyses 1,2-di-(9Z-octadecenoyl)-sn-glycerol + hexadecanoyl-CoA = 1,2-di-(9Z)-octadecenoyl-3-hexadecanoyl-sn-glycerol + CoA. It catalyses the reaction 1,3-di-(9Z-octadecenoyl)-glycerol + (9Z)-octadecenoyl-CoA = 1,2,3-tri-(9Z-octadecenoyl)-glycerol + CoA. The catalysed reaction is 2,3-di-(9Z)-octadecenoyl-sn-glycerol + (9Z)-octadecenoyl-CoA = 1,2,3-tri-(9Z-octadecenoyl)-glycerol + CoA. It carries out the reaction 2-(9Z-octadecenoyl)-glycerol + hexadecanoyl-CoA = 1-hexadecanoyl-2-(9Z-octadecenoyl)-sn-glycerol + CoA. It participates in glycerolipid metabolism; triacylglycerol biosynthesis. With respect to regulation, inhibited by niacin. Essential acyltransferase that catalyzes the terminal and only committed step in triacylglycerol synthesis by using diacylglycerol and fatty acyl CoA as substrates. Required for synthesis and storage of intracellular triglycerides. Probably plays a central role in cytosolic lipid accumulation. In liver, is primarily responsible for incorporating endogenously synthesized fatty acids into triglycerides. Also functions as an acyl-CoA retinol acyltransferase (ARAT). Also able to use 1-monoalkylglycerol (1-MAkG) as an acyl acceptor for the synthesis of monoalkyl-monoacylglycerol (MAMAG). The chain is Diacylglycerol O-acyltransferase 2 from Homo sapiens (Human).